We begin with the raw amino-acid sequence, 397 residues long: F-box protein At3g28330 (397 aa).

One can recognise an F-box domain in the interval 6–56 (KKDMDFLTEDLWEIILARLPLKSIITTPKLVCKVWKSIIESRCFRDLFQSL).

The sequence is that of F-box protein At3g28330 from Arabidopsis thaliana (Mouse-ear cress).